Here is a 1756-residue protein sequence, read N- to C-terminus: Periplakin (1756 aa).

Ser14 is subject to Phosphoserine. Coiled coils occupy residues 16–125 and 188–389; these read TVQT…KQIY and KEQN…QQVV. 4 Spectrin repeats span residues 216-317, 323-485, 505-612, and 733-861; these read QDYM…SHLK, HQFH…RTLQ, RQLL…EKVD, and EHFH…QNLE. In terms of domain architecture, SH3 spans 399–455; sequence LKPIPVEALCDFEGEQGLISRGYSYTLQKNNGESWELMDSAGNKLIAPAVCFVIPPT. The residue at position 465 (Ser465) is a Phosphoserine. Coiled-coil stretches lie at residues 585 to 820 and 886 to 1645; these read LLRT…GRRS and DSGV…SVAV. 4 positions are modified to phosphoserine: Ser887, Ser949, Ser1584, and Ser1657. An interacts with BFSP2 and VIM region spans residues 1557–1756; it reads ELDFLREENH…ELAVLVSGQK (200 aa). Plectin repeat units lie at residues 1651-1685 and 1700-1735; these read ENHL…WNMF and VKGP…PAQY.

This sequence belongs to the plakin or cytolinker family. As to quaternary structure, homodimer or a heterodimer with EVPL. Found in a complex composed of PPL (via C-terminal linker domain), BFSP1 and BFSP2 in the retinal lens. Within the complex interacts (via C-terminal linker domain) with BFSP2. Interacts with VIM. Binds to the PH domain of AKT1. Interacts with FCGR1A. May interact with PPHLN1. Expressed in stratified squamous epithelia and in some other epithelia.

The protein resides in the cell junction. Its subcellular location is the desmosome. It localises to the cytoplasm. The protein localises to the cytoskeleton. It is found in the cell membrane. In terms of biological role, component of the cornified envelope of keratinocytes. May link the cornified envelope to desmosomes and intermediate filaments. May act as a localization signal in PKB/AKT-mediated signaling. The protein is Periplakin (PPL) of Homo sapiens (Human).